Here is a 196-residue protein sequence, read N- to C-terminus: MAHGPNYRVKYRRRREGKTNYYKRYTYVINNTTRLVVRLTNKYIIAQIAKFNPKGDVIVVAAHSMELAKKFGWKGDLNNTPAAYLTGYLLGVRALKAGIKEAVADIGLFVPVKGSRIFTAIKGAIDAGLSIPVGDLGIKEDRIKGVHIASYAQKLEAENPELFKRLFSKYLERGLHPKDLPSHFEEILNKIKSGGA.

The protein belongs to the universal ribosomal protein uL18 family. As to quaternary structure, part of the 50S ribosomal subunit. Contacts the 5S and 23S rRNAs.

This is one of the proteins that bind and probably mediate the attachment of the 5S RNA into the large ribosomal subunit, where it forms part of the central protuberance. This chain is Large ribosomal subunit protein uL18, found in Sulfurisphaera tokodaii (strain DSM 16993 / JCM 10545 / NBRC 100140 / 7) (Sulfolobus tokodaii).